The primary structure comprises 362 residues: D-alanine--D-alanine ligase (362 aa).

The ATP-grasp domain occupies 134 to 345 (KILAQRAGVP…YPDLITRLIR (212 aa)). 170–225 (GQLGTSNLFVKPSNQGSSVGITHVTDDSNYAEALAEAFKYDDKVLVEEGIVGTEVE) is an ATP binding site. Mg(2+)-binding residues include aspartate 298, glutamate 312, and asparagine 314.

The protein belongs to the D-alanine--D-alanine ligase family. Requires Mg(2+) as cofactor. It depends on Mn(2+) as a cofactor.

Its subcellular location is the cytoplasm. The enzyme catalyses 2 D-alanine + ATP = D-alanyl-D-alanine + ADP + phosphate + H(+). Its pathway is cell wall biogenesis; peptidoglycan biosynthesis. Functionally, cell wall formation. This Lactobacillus delbrueckii subsp. bulgaricus (strain ATCC 11842 / DSM 20081 / BCRC 10696 / JCM 1002 / NBRC 13953 / NCIMB 11778 / NCTC 12712 / WDCM 00102 / Lb 14) protein is D-alanine--D-alanine ligase.